Here is a 216-residue protein sequence, read N- to C-terminus: Holliday junction branch migration complex subunit RuvA (216 aa).

A domain I region spans residues Met1–Lys64. The tract at residues Ser65–Thr143 is domain II. The segment at Ser144 to Val163 is flexible linker. The domain III stretch occupies residues Leu164–Arg216.

The protein belongs to the RuvA family. Homotetramer. Forms an RuvA(8)-RuvB(12)-Holliday junction (HJ) complex. HJ DNA is sandwiched between 2 RuvA tetramers; dsDNA enters through RuvA and exits via RuvB. An RuvB hexamer assembles on each DNA strand where it exits the tetramer. Each RuvB hexamer is contacted by two RuvA subunits (via domain III) on 2 adjacent RuvB subunits; this complex drives branch migration. In the full resolvosome a probable DNA-RuvA(4)-RuvB(12)-RuvC(2) complex forms which resolves the HJ.

It localises to the cytoplasm. Functionally, the RuvA-RuvB-RuvC complex processes Holliday junction (HJ) DNA during genetic recombination and DNA repair, while the RuvA-RuvB complex plays an important role in the rescue of blocked DNA replication forks via replication fork reversal (RFR). RuvA specifically binds to HJ cruciform DNA, conferring on it an open structure. The RuvB hexamer acts as an ATP-dependent pump, pulling dsDNA into and through the RuvAB complex. HJ branch migration allows RuvC to scan DNA until it finds its consensus sequence, where it cleaves and resolves the cruciform DNA. This Francisella tularensis subsp. mediasiatica (strain FSC147) protein is Holliday junction branch migration complex subunit RuvA.